A 508-amino-acid chain; its full sequence is tRNA(Ile2) 2-agmatinylcytidine synthetase TiaS (508 aa).

The segment at residues 367-427 (ITGGHVLIEL…YQLNIEKINV (61 aa)) is a DNA-binding region (OB).

It belongs to the TiaS family.

The protein localises to the cytoplasm. The catalysed reaction is cytidine(34) in tRNA(Ile2) + agmatine + ATP + H2O = 2-agmatinylcytidine(34) in tRNA(Ile2) + AMP + 2 phosphate + 2 H(+). Its function is as follows. ATP-dependent agmatine transferase that catalyzes the formation of 2-agmatinylcytidine (agm2C) at the wobble position (C34) of tRNA(Ile2), converting the codon specificity from AUG to AUA. The protein is tRNA(Ile2) 2-agmatinylcytidine synthetase TiaS of Methanococcus voltae (strain ATCC BAA-1334 / A3).